Reading from the N-terminus, the 311-residue chain is Methionyl-tRNA formyltransferase (311 aa).

(6S)-5,6,7,8-tetrahydrofolate is bound at residue 109-112 (SLLP).

It belongs to the Fmt family.

The enzyme catalyses L-methionyl-tRNA(fMet) + (6R)-10-formyltetrahydrofolate = N-formyl-L-methionyl-tRNA(fMet) + (6S)-5,6,7,8-tetrahydrofolate + H(+). In terms of biological role, attaches a formyl group to the free amino group of methionyl-tRNA(fMet). The formyl group appears to play a dual role in the initiator identity of N-formylmethionyl-tRNA by promoting its recognition by IF2 and preventing the misappropriation of this tRNA by the elongation apparatus. This chain is Methionyl-tRNA formyltransferase, found in Staphylococcus aureus (strain bovine RF122 / ET3-1).